We begin with the raw amino-acid sequence, 460 residues long: UDP-N-acetylmuramate--L-alanine ligase (460 aa).

ATP is bound at residue 119–125; sequence GSHGKTT.

The protein belongs to the MurCDEF family.

It localises to the cytoplasm. The enzyme catalyses UDP-N-acetyl-alpha-D-muramate + L-alanine + ATP = UDP-N-acetyl-alpha-D-muramoyl-L-alanine + ADP + phosphate + H(+). It functions in the pathway cell wall biogenesis; peptidoglycan biosynthesis. Cell wall formation. The chain is UDP-N-acetylmuramate--L-alanine ligase from Alkaliphilus metalliredigens (strain QYMF).